The following is a 163-amino-acid chain: Crossover junction endodeoxyribonuclease RuvC (163 aa).

Catalysis depends on residues aspartate 9, glutamate 76, and aspartate 148. Positions 9, 76, and 148 each coordinate Mg(2+).

This sequence belongs to the RuvC family. Homodimer which binds Holliday junction (HJ) DNA. The HJ becomes 2-fold symmetrical on binding to RuvC with unstacked arms; it has a different conformation from HJ DNA in complex with RuvA. In the full resolvosome a probable DNA-RuvA(4)-RuvB(12)-RuvC(2) complex forms which resolves the HJ. It depends on Mg(2+) as a cofactor.

It is found in the cytoplasm. It catalyses the reaction Endonucleolytic cleavage at a junction such as a reciprocal single-stranded crossover between two homologous DNA duplexes (Holliday junction).. Its function is as follows. The RuvA-RuvB-RuvC complex processes Holliday junction (HJ) DNA during genetic recombination and DNA repair. Endonuclease that resolves HJ intermediates. Cleaves cruciform DNA by making single-stranded nicks across the HJ at symmetrical positions within the homologous arms, yielding a 5'-phosphate and a 3'-hydroxyl group; requires a central core of homology in the junction. The consensus cleavage sequence is 5'-(A/T)TT(C/G)-3'. Cleavage occurs on the 3'-side of the TT dinucleotide at the point of strand exchange. HJ branch migration catalyzed by RuvA-RuvB allows RuvC to scan DNA until it finds its consensus sequence, where it cleaves and resolves the cruciform DNA. The chain is Crossover junction endodeoxyribonuclease RuvC from Nostoc punctiforme (strain ATCC 29133 / PCC 73102).